The chain runs to 353 residues: 3-dehydroquinate synthase (353 aa).

NAD(+) contacts are provided by residues 60–65 (AGDMNK), 94–98 (GMITD), 118–119 (TT), K131, and K140. Zn(2+)-binding residues include E173, H234, and H253.

This sequence belongs to the sugar phosphate cyclases superfamily. Dehydroquinate synthase family. It depends on NAD(+) as a cofactor. Co(2+) is required as a cofactor. The cofactor is Zn(2+).

The protein resides in the cytoplasm. It carries out the reaction 7-phospho-2-dehydro-3-deoxy-D-arabino-heptonate = 3-dehydroquinate + phosphate. It functions in the pathway metabolic intermediate biosynthesis; chorismate biosynthesis; chorismate from D-erythrose 4-phosphate and phosphoenolpyruvate: step 2/7. Catalyzes the conversion of 3-deoxy-D-arabino-heptulosonate 7-phosphate (DAHP) to dehydroquinate (DHQ). This chain is 3-dehydroquinate synthase, found in Parabacteroides distasonis (strain ATCC 8503 / DSM 20701 / CIP 104284 / JCM 5825 / NCTC 11152).